The primary structure comprises 303 residues: Proteasome subunit beta (303 aa).

A propeptide spans 1-64 (removed in mature form; by autocatalysis); that stretch reads MTWPDRDTSA…VTPSDAVPHG (64 aa). Thr-65 (nucleophile) is an active-site residue.

This sequence belongs to the peptidase T1B family. The 20S proteasome core is composed of 14 alpha and 14 beta subunits that assemble into four stacked heptameric rings, resulting in a barrel-shaped structure. The two inner rings, each composed of seven catalytic beta subunits, are sandwiched by two outer rings, each composed of seven alpha subunits. The catalytic chamber with the active sites is on the inside of the barrel. Has a gated structure, the ends of the cylinder being occluded by the N-termini of the alpha-subunits. Is capped by the proteasome-associated ATPase, ARC.

The protein resides in the cytoplasm. It carries out the reaction Cleavage of peptide bonds with very broad specificity.. Its pathway is protein degradation; proteasomal Pup-dependent pathway. With respect to regulation, the formation of the proteasomal ATPase ARC-20S proteasome complex, likely via the docking of the C-termini of ARC into the intersubunit pockets in the alpha-rings, may trigger opening of the gate for substrate entry. Interconversion between the open-gate and close-gate conformations leads to a dynamic regulation of the 20S proteasome proteolysis activity. In terms of biological role, component of the proteasome core, a large protease complex with broad specificity involved in protein degradation. The chain is Proteasome subunit beta from Mycolicibacterium gilvum (strain PYR-GCK) (Mycobacterium gilvum (strain PYR-GCK)).